Consider the following 205-residue polypeptide: Urease accessory protein UreG (205 aa).

10–17 serves as a coordination point for GTP; it reads GPVGSGKT.

This sequence belongs to the SIMIBI class G3E GTPase family. UreG subfamily. As to quaternary structure, homodimer. UreD, UreF and UreG form a complex that acts as a GTP-hydrolysis-dependent molecular chaperone, activating the urease apoprotein by helping to assemble the nickel containing metallocenter of UreC. The UreE protein probably delivers the nickel.

It localises to the cytoplasm. In terms of biological role, facilitates the functional incorporation of the urease nickel metallocenter. This process requires GTP hydrolysis, probably effectuated by UreG. The chain is Urease accessory protein UreG from Corynebacterium urealyticum (strain ATCC 43042 / DSM 7109).